The sequence spans 475 residues: MSIKHWMSAPIAVATLFASQLLLAGSVLAAENNDRLDPRNDAFEQKHPDQYHSWKATSESKHIEDALSEDPNMVILWAGYGFAKDYNKARGHFYALDDVRQTLRTGAPADENSGPMPMACWSCKSPDVARVIEERGEDGYFSGKWARLGSEIVNPIGCSDCHDTRSEKFNQGEPELALTRPYVERAFDVIGKNFDDQSRLDKQASVCAQCHVEYYFTGPTKAVKFPWDMGTTVGDMEKYYDALDFKDWTHAVSKAPMLKAQHPGFETWREGIHGKNKVVCVDCHMPKVTKADGTVYTDHKVGNPFDRFEDTCAQCHTQTKEQLRNIVSSRKALVLNMKLTAEKQIVAAHFEAGEAWKAGATEEEMKPILQDIRHAQWRWDYAIASHGVHMHAPEVALEVLGTAVDRAADARTKLVRLLATKGITEPVQIPDISTKAKAQEALGMDMEKMNADKKHFLDTVVPDWDKAAAEREATY.

An N-terminal signal peptide occupies residues 1–29; that stretch reads MSIKHWMSAPIAVATLFASQLLLAGSVLA. The segment at 38–57 is disordered; sequence PRNDAFEQKHPDQYHSWKAT. Position 92 (H92) interacts with heme c. Residues C120, C123, and K124 each contribute to the heme site. Heme c contacts are provided by C158, C161, H162, C207, C210, and H211. Ca(2+) is bound by residues E213, Y214, K259, and Q261. Residue Y214 participates in substrate binding. H262 serves as a coordination point for substrate. Heme c is bound by residues H273, C280, C283, H284, H299, C312, C315, H316, and H391.

The protein belongs to the cytochrome c-552 family. Ca(2+) serves as cofactor. Requires heme c as cofactor.

It localises to the periplasm. It carries out the reaction 6 Fe(III)-[cytochrome c] + NH4(+) + 2 H2O = 6 Fe(II)-[cytochrome c] + nitrite + 8 H(+). It participates in nitrogen metabolism; nitrate reduction (assimilation). In terms of biological role, catalyzes the reduction of nitrite to ammonia, consuming six electrons in the process. This Vibrio parahaemolyticus serotype O3:K6 (strain RIMD 2210633) protein is Cytochrome c-552.